The primary structure comprises 265 residues: Hydroxyethylthiazole kinase (265 aa).

Met-50 is a binding site for substrate. Positions 125 and 171 each coordinate ATP. Position 198 (Gly-198) interacts with substrate.

The protein belongs to the Thz kinase family. Mg(2+) serves as cofactor.

It carries out the reaction 5-(2-hydroxyethyl)-4-methylthiazole + ATP = 4-methyl-5-(2-phosphooxyethyl)-thiazole + ADP + H(+). Its pathway is cofactor biosynthesis; thiamine diphosphate biosynthesis; 4-methyl-5-(2-phosphoethyl)-thiazole from 5-(2-hydroxyethyl)-4-methylthiazole: step 1/1. Catalyzes the phosphorylation of the hydroxyl group of 4-methyl-5-beta-hydroxyethylthiazole (THZ). The sequence is that of Hydroxyethylthiazole kinase from Salmonella paratyphi B (strain ATCC BAA-1250 / SPB7).